The chain runs to 1120 residues: Transcription-repair-coupling factor (1120 aa).

One can recognise a Helicase ATP-binding domain in the interval 591-756; that stretch reads DLTNGMLMDR…MTGLKELSII (166 aa). An ATP-binding site is contributed by 604-611; the sequence is GDVGFGKT. A DEEQ box motif is present at residues 709–712; the sequence is DEEQ. A Helicase C-terminal domain is found at 777–933; it reads IIRDALLREH…TIASHDADLR (157 aa).

The protein in the N-terminal section; belongs to the UvrB family. It in the C-terminal section; belongs to the helicase family. RecG subfamily.

The protein localises to the cytoplasm. In terms of biological role, couples transcription and DNA repair by recognizing RNA polymerase (RNAP) stalled at DNA lesions. Mediates ATP-dependent release of RNAP and its truncated transcript from the DNA, and recruitment of nucleotide excision repair machinery to the damaged site. This Rickettsia prowazekii (strain Madrid E) protein is Transcription-repair-coupling factor.